The following is a 313-amino-acid chain: Small ribosomal subunit biogenesis GTPase RsgA (313 aa).

The region spanning 80 to 237 is the CP-type G domain; the sequence is KVALRQVIVS…LIDTPGIKEF (158 aa). GTP-binding positions include 129–132 and 180–188; these read NKVD and GQSGVGKSS. Cys261, Cys266, His268, and Cys274 together coordinate Zn(2+).

Belongs to the TRAFAC class YlqF/YawG GTPase family. RsgA subfamily. Monomer. Associates with 30S ribosomal subunit, binds 16S rRNA. It depends on Zn(2+) as a cofactor.

The protein localises to the cytoplasm. Its function is as follows. One of several proteins that assist in the late maturation steps of the functional core of the 30S ribosomal subunit. Helps release RbfA from mature subunits. May play a role in the assembly of ribosomal proteins into the subunit. Circularly permuted GTPase that catalyzes slow GTP hydrolysis, GTPase activity is stimulated by the 30S ribosomal subunit. This is Small ribosomal subunit biogenesis GTPase RsgA from Borrelia recurrentis (strain A1).